The primary structure comprises 433 residues: Glutamate-1-semialdehyde 2,1-aminomutase (433 aa).

Lysine 271 is subject to N6-(pyridoxal phosphate)lysine.

This sequence belongs to the class-III pyridoxal-phosphate-dependent aminotransferase family. HemL subfamily. As to quaternary structure, homodimer. It depends on pyridoxal 5'-phosphate as a cofactor.

Its subcellular location is the cytoplasm. It carries out the reaction (S)-4-amino-5-oxopentanoate = 5-aminolevulinate. It functions in the pathway porphyrin-containing compound metabolism; protoporphyrin-IX biosynthesis; 5-aminolevulinate from L-glutamyl-tRNA(Glu): step 2/2. It participates in porphyrin-containing compound metabolism; chlorophyll biosynthesis. The polypeptide is Glutamate-1-semialdehyde 2,1-aminomutase (Prochlorococcus marinus (strain MIT 9515)).